Reading from the N-terminus, the 189-residue chain is Elongation factor P (189 aa).

The protein belongs to the elongation factor P family.

It is found in the cytoplasm. It participates in protein biosynthesis; polypeptide chain elongation. Functionally, involved in peptide bond synthesis. Stimulates efficient translation and peptide-bond synthesis on native or reconstituted 70S ribosomes in vitro. Probably functions indirectly by altering the affinity of the ribosome for aminoacyl-tRNA, thus increasing their reactivity as acceptors for peptidyl transferase. This Pseudomonas savastanoi pv. phaseolicola (strain 1448A / Race 6) (Pseudomonas syringae pv. phaseolicola (strain 1448A / Race 6)) protein is Elongation factor P.